The primary structure comprises 221 residues: Probable lipoprotein CT_734 (221 aa).

The signal sequence occupies residues 1-24; the sequence is MKKFIYKYSFGALLLLSGLSGLSS. Residue cysteine 25 is the site of N-palmitoyl cysteine attachment. A lipid anchor (S-diacylglycerol cysteine) is attached at cysteine 25.

It belongs to the chlamydial CPn_0875/CT_734/TC_0107 family.

The protein resides in the cell membrane. This is Probable lipoprotein CT_734 from Chlamydia trachomatis serovar D (strain ATCC VR-885 / DSM 19411 / UW-3/Cx).